The chain runs to 417 residues: S-adenosylmethionine synthase (417 aa).

Residue H16 coordinates ATP. D18 is a Mg(2+) binding site. E44 lines the K(+) pocket. Residues E57 and Q100 each contribute to the L-methionine site. The tract at residues 100–110 (QSPDIAQGVDT) is flexible loop. Residues 175-177 (DGK), 251-252 (KF), D260, 266-267 (RK), A283, and K287 contribute to the ATP site. D260 provides a ligand contact to L-methionine. K291 provides a ligand contact to L-methionine.

It belongs to the AdoMet synthase family. As to quaternary structure, homotetramer; dimer of dimers. Mg(2+) is required as a cofactor. It depends on K(+) as a cofactor.

Its subcellular location is the cytoplasm. It catalyses the reaction L-methionine + ATP + H2O = S-adenosyl-L-methionine + phosphate + diphosphate. The protein operates within amino-acid biosynthesis; S-adenosyl-L-methionine biosynthesis; S-adenosyl-L-methionine from L-methionine: step 1/1. Catalyzes the formation of S-adenosylmethionine (AdoMet) from methionine and ATP. The overall synthetic reaction is composed of two sequential steps, AdoMet formation and the subsequent tripolyphosphate hydrolysis which occurs prior to release of AdoMet from the enzyme. The protein is S-adenosylmethionine synthase of Synechococcus elongatus (strain ATCC 33912 / PCC 7942 / FACHB-805) (Anacystis nidulans R2).